A 377-amino-acid chain; its full sequence is CaM kinase-like vesicle-associated protein (377 aa).

The Protein kinase domain occupies Y24 to I287. The tract at residues M324–G377 is disordered. A compositionally biased stretch (low complexity) spans T347–A362. Over residues L368 to G377 the composition is skewed to pro residues.

The protein belongs to the protein kinase superfamily. CAMK Ser/Thr protein kinase family. Interacts with calmodulin, in the presence of calcium. It depends on Ca(2+) as a cofactor.

It is found in the cytoplasmic vesicle membrane. Its function is as follows. Does not appear to have detectable kinase activity. This Xenopus laevis (African clawed frog) protein is CaM kinase-like vesicle-associated protein (camkv).